Consider the following 317-residue polypeptide: ADP-L-glycero-D-manno-heptose-6-epimerase (317 aa).

Residues 10 to 11, 31 to 32, lysine 38, lysine 53, 76 to 80, and asparagine 93 each bind NADP(+); these read FI, DD, and QGACS. Tyrosine 140 functions as the Proton acceptor in the catalytic mechanism. Lysine 144 contributes to the NADP(+) binding site. Asparagine 169 lines the substrate pocket. Residues isoleucine 170 and lysine 178 each contribute to the NADP(+) site. Residue lysine 178 is the Proton acceptor of the active site. Residues alanine 180, histidine 187, 201 to 204, arginine 214, and tyrosine 278 contribute to the substrate site; that span reads FEGC.

The protein belongs to the NAD(P)-dependent epimerase/dehydratase family. HldD subfamily. As to quaternary structure, homopentamer. NADP(+) is required as a cofactor.

The enzyme catalyses ADP-D-glycero-beta-D-manno-heptose = ADP-L-glycero-beta-D-manno-heptose. It participates in nucleotide-sugar biosynthesis; ADP-L-glycero-beta-D-manno-heptose biosynthesis; ADP-L-glycero-beta-D-manno-heptose from D-glycero-beta-D-manno-heptose 7-phosphate: step 4/4. Functionally, catalyzes the interconversion between ADP-D-glycero-beta-D-manno-heptose and ADP-L-glycero-beta-D-manno-heptose via an epimerization at carbon 6 of the heptose. The polypeptide is ADP-L-glycero-D-manno-heptose-6-epimerase (Nitrosococcus oceani (strain ATCC 19707 / BCRC 17464 / JCM 30415 / NCIMB 11848 / C-107)).